The primary structure comprises 196 residues: Rho-related protein racA (196 aa).

Residues alanine 13, glycine 15, lysine 16, threonine 17, cysteine 18, tyrosine 32, threonine 35, glycine 60, lysine 116, aspartate 118, and alanine 159 each contribute to the GTP site. Residue threonine 17 coordinates Mg(2+). Short sequence motifs (switch) lie at residues asparagine 26–phenylalanine 37 and aspartate 57–threonine 75. Threonine 35 contacts Mg(2+). Cysteine 193 bears the Cysteine methyl ester mark. Cysteine 193 carries S-geranylgeranyl cysteine lipidation. The propeptide at leucine 194–phenylalanine 196 is removed in mature form.

Belongs to the small GTPase superfamily. Rho family. Interacts (GTP-bound form) with PAK2 (via CRIB domain). Mg(2+) is required as a cofactor.

Its subcellular location is the cell membrane. It is found in the cytoplasm. The protein localises to the cytoskeleton. It catalyses the reaction GTP + H2O = GDP + phosphate + H(+). Its activity is regulated as follows. Regulated by guanine nucleotide exchange factors (GEFs) which promote the exchange of bound GDP for free GTP, GTPase activating proteins (GAPs) which increase the GTP hydrolysis activity, and GDP dissociation inhibitors which inhibit the dissociation of the nucleotide from the GTPase. In terms of biological role, small GTPase which cycles between active GTP-bound and inactive GDP-bound states. Involved in cytoskeleton remodeling. Plays a role in phagocytosis of bacteria and host erythrocytes. Involved in capping of surface receptors. May be involved in cytokinesis. The chain is Rho-related protein racA from Entamoeba histolytica (strain ATCC 30459 / HM-1:IMSS / ABRM).